Here is a 364-residue protein sequence, read N- to C-terminus: D-alanine--D-alanine ligase A (364 aa).

The ATP-grasp domain occupies 145-348; the sequence is KRLLRDAGLN…YTDLISRLIE (204 aa). Residue 175-230 participates in ATP binding; it reads ESRLGLPLFVKPANQGSSVGVSKVANEAQYQQAVALAFEFDHKVVVEQGIKGREIE. Residues aspartate 302, glutamate 315, and asparagine 317 each contribute to the Mg(2+) site.

The protein belongs to the D-alanine--D-alanine ligase family. It depends on Mg(2+) as a cofactor. Mn(2+) is required as a cofactor.

It localises to the cytoplasm. It catalyses the reaction 2 D-alanine + ATP = D-alanyl-D-alanine + ADP + phosphate + H(+). Its pathway is cell wall biogenesis; peptidoglycan biosynthesis. Cell wall formation. The polypeptide is D-alanine--D-alanine ligase A (ddlA) (Salmonella typhi).